We begin with the raw amino-acid sequence, 171 residues long: Transcription antitermination protein NusB (171 aa).

It belongs to the NusB family.

Its function is as follows. Involved in transcription antitermination. Required for transcription of ribosomal RNA (rRNA) genes. Binds specifically to the boxA antiterminator sequence of the ribosomal RNA (rrn) operons. In Brucella melitensis biotype 1 (strain ATCC 23456 / CCUG 17765 / NCTC 10094 / 16M), this protein is Transcription antitermination protein NusB.